The chain runs to 156 residues: MHRREQSFGIQMLSVQPDTKPKGCAGCNRKIKDRYLLKALDKYWHEDCLKCACCDCRLGEVGSTLYTKANLILCRRDYLRLFGVTGNCAACSKLIPAFEMVMRAKENVYHLDCFACQLCNQRFCVGDKFFLKNNMILCQTDYEEGLMKEGYSAQVR.

2 consecutive LIM zinc-binding domains span residues 22–84 (KGCA…LFGV) and 86–148 (GNCA…GLMK).

The protein is LIM domain only protein 3 of Xenopus laevis (African clawed frog).